We begin with the raw amino-acid sequence, 224 residues long: Deoxyribose-phosphate aldolase (224 aa).

Catalysis depends on Asp92, which acts as the Proton donor/acceptor. Catalysis depends on Lys155, which acts as the Schiff-base intermediate with acetaldehyde. Lys184 functions as the Proton donor/acceptor in the catalytic mechanism.

Belongs to the DeoC/FbaB aldolase family. DeoC type 1 subfamily.

It localises to the cytoplasm. The catalysed reaction is 2-deoxy-D-ribose 5-phosphate = D-glyceraldehyde 3-phosphate + acetaldehyde. It participates in carbohydrate degradation; 2-deoxy-D-ribose 1-phosphate degradation; D-glyceraldehyde 3-phosphate and acetaldehyde from 2-deoxy-alpha-D-ribose 1-phosphate: step 2/2. In terms of biological role, catalyzes a reversible aldol reaction between acetaldehyde and D-glyceraldehyde 3-phosphate to generate 2-deoxy-D-ribose 5-phosphate. The sequence is that of Deoxyribose-phosphate aldolase from Shouchella clausii (strain KSM-K16) (Alkalihalobacillus clausii).